The following is a 318-amino-acid chain: Ribose-phosphate pyrophosphokinase (318 aa).

ATP is bound by residues Asp-40–Glu-42 and Arg-99–Gln-100. Residues His-134 and Asp-173 each coordinate Mg(2+). Lys-196 is a catalytic residue. Residues Arg-198, Asp-222, and Asp-226–Thr-230 contribute to the D-ribose 5-phosphate site.

It belongs to the ribose-phosphate pyrophosphokinase family. Class I subfamily. As to quaternary structure, homohexamer. The cofactor is Mg(2+).

The protein localises to the cytoplasm. It catalyses the reaction D-ribose 5-phosphate + ATP = 5-phospho-alpha-D-ribose 1-diphosphate + AMP + H(+). It functions in the pathway metabolic intermediate biosynthesis; 5-phospho-alpha-D-ribose 1-diphosphate biosynthesis; 5-phospho-alpha-D-ribose 1-diphosphate from D-ribose 5-phosphate (route I): step 1/1. In terms of biological role, involved in the biosynthesis of the central metabolite phospho-alpha-D-ribosyl-1-pyrophosphate (PRPP) via the transfer of pyrophosphoryl group from ATP to 1-hydroxyl of ribose-5-phosphate (Rib-5-P). The chain is Ribose-phosphate pyrophosphokinase from Burkholderia pseudomallei (strain K96243).